Here is a 382-residue protein sequence, read N- to C-terminus: uncharacterized protein (382 aa).

The next 12 membrane-spanning stretches (helical) occupy residues 14-34, 45-65, 79-99, 102-122, 131-151, 157-177, 204-224, 235-255, 270-290, 291-311, 325-345, and 348-368; these read GLLLLTLAIAVLNTLVPLWLA, VVSSSYFTGNLVGTLLTGYVI, FIFAAGCAGLGLMIGFWSWLA, FVAGVGCAMIWVVVESALMCS, LLAAYMMVYYVGTFLGQLLVS, LMSVLPWVTGLTLAGILPLLF, LGVNGCIISGIVLGSLYGLMP, ASIGFWMAVLVSAGILGQWPI, VQVFVVILGSIAMLSQAAMAP, ALFILGAAGFTLYPVAMAWAC, ALLLSYTVGSLLGPSFTAMLM, and FSDNLLFIMIASVSFIYLLML.

The protein belongs to the major facilitator superfamily. YcaD (TC 2.A.1.26) family.

It localises to the cell inner membrane. This is an uncharacterized protein from Shigella dysenteriae serotype 1 (strain Sd197).